Here is a 215-residue protein sequence, read N- to C-terminus: GTP-binding protein YPT6 (215 aa).

17–24 (GEQGVGKT) provides a ligand contact to GTP. Residues 39–47 (YQATIGIDF) carry the Effector region motif. GTP-binding positions include 65-69 (DTAGQ) and 124-127 (NKSD). Residues 178–196 (NSESTPLDSENANSANQNK) show a composition bias toward polar residues. The disordered stretch occupies residues 178 to 215 (NSESTPLDSENANSANQNKPGVIDISTAEEQEQSACQC). Residues cysteine 213 and cysteine 215 are each lipidated (S-geranylgeranyl cysteine). Cysteine 215 bears the Cysteine methyl ester mark.

This sequence belongs to the small GTPase superfamily. Rab family. Interacts with YIF1, YIP3 and YIP4.

The protein resides in the cell membrane. In terms of biological role, protein transport. Might participate in post-Golgi transport. This is GTP-binding protein YPT6 (YPT6) from Saccharomyces cerevisiae (strain ATCC 204508 / S288c) (Baker's yeast).